The sequence spans 331 residues: Pyruvate dehydrogenase E1 component subunit beta (331 aa).

Glu60 lines the thiamine diphosphate pocket. Residues Leu113, Ala161, Ile162, Asp164, and Asn166 each contribute to the K(+) site.

As to quaternary structure, heterodimer of an alpha and a beta chain. Thiamine diphosphate serves as cofactor.

It is found in the plastid. The protein resides in the chloroplast. It catalyses the reaction N(6)-[(R)-lipoyl]-L-lysyl-[protein] + pyruvate + H(+) = N(6)-[(R)-S(8)-acetyldihydrolipoyl]-L-lysyl-[protein] + CO2. Its function is as follows. The pyruvate dehydrogenase complex catalyzes the overall conversion of pyruvate to acetyl-CoA and CO(2). It contains multiple copies of three enzymatic components: pyruvate dehydrogenase (E1), dihydrolipoamide acetyltransferase (E2) and lipoamide dehydrogenase (E3). This Porphyra purpurea (Red seaweed) protein is Pyruvate dehydrogenase E1 component subunit beta (pdhB).